A 643-amino-acid polypeptide reads, in one-letter code: Enzymatic polyprotein (643 aa).

A Peptidase A3A domain is found at 6-209; sequence NPNATFITVK…KEVNVPNNIP (204 aa). The For protease activity role is filled by D26. A Reverse transcriptase domain is found at 226-410; that stretch reads VRKGIIEESK…QTIDFLGLTL (185 aa). Residues D296, D360, and D361 each contribute to the Mg(2+) site.

The protein belongs to the caulimoviridae enzymatic polyprotein family.

The enzyme catalyses DNA(n) + a 2'-deoxyribonucleoside 5'-triphosphate = DNA(n+1) + diphosphate. In terms of biological role, encodes for at least two polypeptides: protease (PR) and reverse transcriptase (RT). The protease processes the polyprotein in cis. Reverse transcriptase is multifunctional enzyme that converts the viral RNA genome into dsDNA in viral cytoplasmic capsids. This enzyme displays a DNA polymerase activity that can copy either DNA or RNA templates, and a ribonuclease H (RNase H) activity that cleaves the RNA strand of RNA-DNA heteroduplexes in a partially processive 3'- to 5'-endonucleasic mode. Neo-synthesized pregenomic RNA (pgRNA) are encapsidated, and reverse-transcribed inside the nucleocapsid. Partial (+)DNA is synthesized from the (-)DNA template and generates the relaxed circular DNA (RC-DNA) genome. After budding and infection, the RC-DNA migrates in the nucleus, and is converted into a plasmid-like covalently closed circular DNA (cccDNA). In Cestrum parqui (CmYLCV), this protein is Enzymatic polyprotein.